A 216-amino-acid polypeptide reads, in one-letter code: Uracil phosphoribosyltransferase (216 aa).

GTP-binding positions include Arg32, Arg41, 75–78 (LGKI), and Lys77. Arg85 lines the 5-phospho-alpha-D-ribose 1-diphosphate pocket. Position 102 (Arg102) interacts with GTP. Arg110 is a 5-phospho-alpha-D-ribose 1-diphosphate binding site. Arg131 serves as a coordination point for GTP. Residues Asp137 and 137–145 (DPMLATGGS) each bind 5-phospho-alpha-D-ribose 1-diphosphate. A D-ribose 5-phosphate-binding site is contributed by Tyr201. Residues Leu202 and 207-209 (GDF) contribute to the uracil site. 5-phospho-alpha-D-ribose 1-diphosphate is bound at residue Asp208.

This sequence belongs to the UPRTase family. Requires Mg(2+) as cofactor.

It carries out the reaction UMP + diphosphate = 5-phospho-alpha-D-ribose 1-diphosphate + uracil. It functions in the pathway pyrimidine metabolism; UMP biosynthesis via salvage pathway; UMP from uracil: step 1/1. Allosterically activated by GTP. Its function is as follows. Catalyzes the conversion of uracil and 5-phospho-alpha-D-ribose 1-diphosphate (PRPP) to UMP and diphosphate. The chain is Uracil phosphoribosyltransferase (FUR1) from Lachancea kluyveri (Yeast).